The following is a 436-amino-acid chain: 3-ketoacyl-CoA thiolase (436 aa).

The active-site Acyl-thioester intermediate is Cys-99. Active-site proton acceptor residues include His-392 and Cys-422.

Belongs to the thiolase-like superfamily. Thiolase family. In terms of assembly, heterotetramer of two alpha chains (FadJ) and two beta chains (FadI).

It localises to the cytoplasm. The enzyme catalyses an acyl-CoA + acetyl-CoA = a 3-oxoacyl-CoA + CoA. Its pathway is lipid metabolism; fatty acid beta-oxidation. In terms of biological role, catalyzes the final step of fatty acid oxidation in which acetyl-CoA is released and the CoA ester of a fatty acid two carbons shorter is formed. The protein is 3-ketoacyl-CoA thiolase of Escherichia coli (strain ATCC 8739 / DSM 1576 / NBRC 3972 / NCIMB 8545 / WDCM 00012 / Crooks).